We begin with the raw amino-acid sequence, 517 residues long: Heat shock 70-related protein 5 (517 aa).

It belongs to the heat shock protein 70 family.

May function in protein folding and assembly, and disassembly of protein complexes. This chain is Heat shock 70-related protein 5, found in Dictyostelium discoideum (Social amoeba).